The chain runs to 758 residues: 5-methyltetrahydropteroyltriglutamate--homocysteine methyltransferase (758 aa).

5-methyltetrahydropteroyltri-L-glutamate is bound by residues Arg-16–Lys-19 and Lys-117. L-homocysteine contacts are provided by residues Ile-436 to Ser-438 and Glu-489. L-methionine contacts are provided by residues Ile-436 to Ser-438 and Glu-489. Residues Arg-520 to Cys-521 and Trp-566 contribute to the 5-methyltetrahydropteroyltri-L-glutamate site. Residue Asp-604 participates in L-homocysteine binding. Residue Asp-604 coordinates L-methionine. Glu-610 contacts 5-methyltetrahydropteroyltri-L-glutamate. 3 residues coordinate Zn(2+): His-646, Cys-648, and Glu-670. His-699 (proton donor) is an active-site residue. Cys-731 lines the Zn(2+) pocket.

Belongs to the vitamin-B12 independent methionine synthase family. Zn(2+) is required as a cofactor.

It carries out the reaction 5-methyltetrahydropteroyltri-L-glutamate + L-homocysteine = tetrahydropteroyltri-L-glutamate + L-methionine. The protein operates within amino-acid biosynthesis; L-methionine biosynthesis via de novo pathway; L-methionine from L-homocysteine (MetE route): step 1/1. Catalyzes the transfer of a methyl group from 5-methyltetrahydrofolate to homocysteine resulting in methionine formation. The protein is 5-methyltetrahydropteroyltriglutamate--homocysteine methyltransferase of Ruthia magnifica subsp. Calyptogena magnifica.